Consider the following 230-residue polypeptide: UPF0173 metal-dependent hydrolase Sca_1312 (230 aa).

The protein belongs to the UPF0173 family.

The chain is UPF0173 metal-dependent hydrolase Sca_1312 from Staphylococcus carnosus (strain TM300).